We begin with the raw amino-acid sequence, 660 residues long: Pescadillo homolog (660 aa).

Disordered stretches follow at residues 313-358 (VESD…SYSS) and 471-660 (PELY…EKKA). Residues 331–342 (EEKPSDAIDKFE) show a composition bias toward basic and acidic residues. The 117-residue stretch at 360–476 (DPAQLFSRLT…ELKSPELYGP (117 aa)) folds into the BRCT domain. Positions 501–659 (LEEQQSEGEA…KRRRLEKEKK (159 aa)) form a coiled coil. The span at 504–566 (QQSEGEAIDA…EEGSEDEEES (63 aa)) shows a compositional bias: acidic residues. Positions 584 to 619 (VKGDKKMDAKTKAKLEAKKALERKKKSEAEDLERAK) are enriched in basic and acidic residues.

It belongs to the pescadillo family. As to quaternary structure, component of the NOP7 complex, composed of ERB1, NOP7 and YTM1. The complex is held together by ERB1, which interacts with NOP7 via its N-terminal domain and with YTM1 via a high-affinity interaction between the seven-bladed beta-propeller domains of the 2 proteins. The NOP7 complex associates with the 66S pre-ribosome.

It is found in the nucleus. Its subcellular location is the nucleolus. It localises to the nucleoplasm. Its function is as follows. Component of the NOP7 complex, which is required for maturation of the 25S and 5.8S ribosomal RNAs and formation of the 60S ribosome. The sequence is that of Pescadillo homolog from Chaetomium globosum (strain ATCC 6205 / CBS 148.51 / DSM 1962 / NBRC 6347 / NRRL 1970) (Soil fungus).